A 577-amino-acid chain; its full sequence is Proline--tRNA ligase (577 aa).

It belongs to the class-II aminoacyl-tRNA synthetase family. ProS type 1 subfamily. As to quaternary structure, homodimer.

The protein resides in the cytoplasm. The catalysed reaction is tRNA(Pro) + L-proline + ATP = L-prolyl-tRNA(Pro) + AMP + diphosphate. Catalyzes the attachment of proline to tRNA(Pro) in a two-step reaction: proline is first activated by ATP to form Pro-AMP and then transferred to the acceptor end of tRNA(Pro). As ProRS can inadvertently accommodate and process non-cognate amino acids such as alanine and cysteine, to avoid such errors it has two additional distinct editing activities against alanine. One activity is designated as 'pretransfer' editing and involves the tRNA(Pro)-independent hydrolysis of activated Ala-AMP. The other activity is designated 'posttransfer' editing and involves deacylation of mischarged Ala-tRNA(Pro). The misacylated Cys-tRNA(Pro) is not edited by ProRS. The protein is Proline--tRNA ligase of Marinobacter nauticus (strain ATCC 700491 / DSM 11845 / VT8) (Marinobacter aquaeolei).